A 156-amino-acid polypeptide reads, in one-letter code: Protein CURVATURE THYLAKOID 1C, chloroplastic (156 aa).

The N-terminal 55 residues, 1-55 (MASISATLPSPLLLTQRKSNLTSIQKLPFSLTRGTNDLSPLSLTRNPSSISLMVK), are a transit peptide targeting the chloroplast. The Stromal segment spans residues 56-83 (ASGESSDSSTDLDVVSTIQNVWDKSEDR). A helical transmembrane segment spans residues 84-104 (LGLIGLGFAGIVALWASLNLI). The Lumenal segment spans residues 105 to 109 (TAIDK). The chain crosses the membrane as a helical span at residues 110-130 (LPVISSGFELVGILFSTWFTY). Residues 131 to 156 (RYLLFKPDRQELSKIVKKSVADILGQ) are Stromal-facing.

This sequence belongs to the CURT family. In terms of assembly, homo- and heterodimers and trimers. Interacts with PSAD2.

The protein localises to the plastid. Its subcellular location is the chloroplast thylakoid membrane. Determines thylakoid architecture by inducing membrane curvature. This is Protein CURVATURE THYLAKOID 1C, chloroplastic (CURT1C) from Arabidopsis thaliana (Mouse-ear cress).